The sequence spans 192 residues: E3 ubiquitin-protein ligase RNF183 (192 aa).

Residues 1 to 161 lie on the Cytoplasmic side of the membrane; that stretch reads MAEQQGRELE…RECFRNPQFR (161 aa). Residues 13-60 form an RING-type zinc finger; sequence CPVCWNPFNNTFHTPKMLDCCHSFCVECLAHLSLVTPARRRLLCPLCR. The chain crosses the membrane as a helical; Anchor for type IV membrane protein span at residues 162-182; sequence IFAYLMAVILSVTLLLIFSIF. The Lumenal segment spans residues 183 to 192; the sequence is WTKQFLWGVG.

In terms of assembly, interacts with FATE1. Interacts with SEC16A. Interacts with BCL2L1. In terms of processing, autoubiquitinated (in vitro). As to expression, kidney and testis.

Its subcellular location is the endoplasmic reticulum membrane. The protein localises to the endoplasmic reticulum. It localises to the golgi apparatus. The protein resides in the cis-Golgi network membrane. It is found in the lysosome membrane. It catalyses the reaction S-ubiquitinyl-[E2 ubiquitin-conjugating enzyme]-L-cysteine + [acceptor protein]-L-lysine = [E2 ubiquitin-conjugating enzyme]-L-cysteine + N(6)-ubiquitinyl-[acceptor protein]-L-lysine.. The protein operates within protein modification; protein ubiquitination. Functionally, acts as an E3 ubiquitin ligase catalyzing the covalent attachment of ubiquitin moieties onto substrate proteins. Triggers apoptosis in response to prolonged ER stress by mediating the polyubiquitination and subsequent proteasomal degradation of BCL2L1. May collaborate with FATE1 to restrain BIK protein levels thus regulating apoptotic signaling. The protein is E3 ubiquitin-protein ligase RNF183 (RNF183) of Homo sapiens (Human).